Reading from the N-terminus, the 228-residue chain is CD302 antigen (228 aa).

A signal peptide spans 1 to 20 (MPHAALSSLVLLSLATAIFA). Residues 21 to 165 (DCPSSIWVQF…YDKKYLSDNH (145 aa)) lie on the Extracellular side of the membrane. The 120-residue stretch at 30–149 (FQGSCYTFLQ…CEMSSVTGTL (120 aa)) folds into the C-type lectin domain. Residue Asn-107 is glycosylated (N-linked (GlcNAc...) asparagine). Cys-125 and Cys-140 are disulfide-bonded. The chain crosses the membrane as a helical span at residues 166 to 186 (ILISTLVIASTVTLAVLGAVI). The Cytoplasmic segment spans residues 187–228 (WFLYRRSARSGFTSFSPAPQSPYSDGCALVVSEEDEYSVQLD).

The protein localises to the membrane. It is found in the cell projection. The protein resides in the filopodium. It localises to the cytoplasm. Its subcellular location is the cell cortex. The protein localises to the microvillus. Its function is as follows. Potential multifunctional C-type lectin receptor that may play roles in endocytosis and phagocytosis as well as in cell adhesion and migration. This chain is CD302 antigen (Cd302), found in Rattus norvegicus (Rat).